Consider the following 250-residue polypeptide: MEELDITSVGQFQTLVRYNNPVLVVKHPDKKGGAPLTEIEMKRPQTAGALLDTKRETEEILNSILPPRCWEEDGQLWQQSVSSTPATRQDVINLQEMLDTRLQQTQARETGICPVRRELYSQCFDEIIRQVTINCSERGLLLLRIRDEIAMSMEAYETLYCSSVAFGMRKALQAHEEKEMLRDRVKTLELDKEALEEIIADMKLKQEQAERRNAELRASEEKKFTEEITFLKKTNAQLKAQLEGITAPKK.

The stretch at 168 to 250 (MRKALQAHEE…QLEGITAPKK (83 aa)) forms a coiled coil.

It belongs to the inner dynein arm light chain family.

The protein resides in the cell projection. Its subcellular location is the cilium. It localises to the dynein axonemal particle. Its function is as follows. May play a dynamic role in flagellar motility. In Drosophila melanogaster (Fruit fly), this protein is Putative inner dynein arm light chain, axonemal.